The following is a 393-amino-acid chain: Formate-dependent phosphoribosylglycinamide formyltransferase (393 aa).

N(1)-(5-phospho-beta-D-ribosyl)glycinamide contacts are provided by residues 22–23 (EL) and Glu-82. ATP contacts are provided by residues Arg-114, Lys-155, 160–165 (SSGHGQ), 195–198 (EGFV), and Glu-203. One can recognise an ATP-grasp domain in the interval 119 to 308 (RLAAEELGLP…QFALHARAVL (190 aa)). Residues Glu-267 and Glu-279 each coordinate Mg(2+). Residues Asp-286, Lys-356, and 363–364 (RR) contribute to the N(1)-(5-phospho-beta-D-ribosyl)glycinamide site.

The protein belongs to the PurK/PurT family. In terms of assembly, homodimer.

It catalyses the reaction N(1)-(5-phospho-beta-D-ribosyl)glycinamide + formate + ATP = N(2)-formyl-N(1)-(5-phospho-beta-D-ribosyl)glycinamide + ADP + phosphate + H(+). The protein operates within purine metabolism; IMP biosynthesis via de novo pathway; N(2)-formyl-N(1)-(5-phospho-D-ribosyl)glycinamide from N(1)-(5-phospho-D-ribosyl)glycinamide (formate route): step 1/1. In terms of biological role, involved in the de novo purine biosynthesis. Catalyzes the transfer of formate to 5-phospho-ribosyl-glycinamide (GAR), producing 5-phospho-ribosyl-N-formylglycinamide (FGAR). Formate is provided by PurU via hydrolysis of 10-formyl-tetrahydrofolate. This Parabacteroides distasonis (strain ATCC 8503 / DSM 20701 / CIP 104284 / JCM 5825 / NCTC 11152) protein is Formate-dependent phosphoribosylglycinamide formyltransferase.